The chain runs to 212 residues: Thymidylate kinase (212 aa).

10–17 contacts ATP; sequence GLEGAGKT.

It belongs to the thymidylate kinase family.

It carries out the reaction dTMP + ATP = dTDP + ADP. In terms of biological role, phosphorylation of dTMP to form dTDP in both de novo and salvage pathways of dTTP synthesis. The chain is Thymidylate kinase from Photorhabdus laumondii subsp. laumondii (strain DSM 15139 / CIP 105565 / TT01) (Photorhabdus luminescens subsp. laumondii).